Consider the following 170-residue polypeptide: 3-isopropylmalate dehydratase small subunit 1 (170 aa).

This sequence belongs to the LeuD family. LeuD type 2 subfamily. As to quaternary structure, heterodimer of LeuC and LeuD.

It catalyses the reaction (2R,3S)-3-isopropylmalate = (2S)-2-isopropylmalate. Its pathway is amino-acid biosynthesis; L-leucine biosynthesis; L-leucine from 3-methyl-2-oxobutanoate: step 2/4. In terms of biological role, catalyzes the isomerization between 2-isopropylmalate and 3-isopropylmalate, via the formation of 2-isopropylmaleate. In Methanopyrus kandleri (strain AV19 / DSM 6324 / JCM 9639 / NBRC 100938), this protein is 3-isopropylmalate dehydratase small subunit 1 (leuD1).